We begin with the raw amino-acid sequence, 305 residues long: Ribosomal protein L11 methyltransferase (305 aa).

S-adenosyl-L-methionine-binding residues include T155, G176, D198, and N241.

The protein belongs to the methyltransferase superfamily. PrmA family.

It is found in the cytoplasm. It carries out the reaction L-lysyl-[protein] + 3 S-adenosyl-L-methionine = N(6),N(6),N(6)-trimethyl-L-lysyl-[protein] + 3 S-adenosyl-L-homocysteine + 3 H(+). Functionally, methylates ribosomal protein L11. The chain is Ribosomal protein L11 methyltransferase from Carboxydothermus hydrogenoformans (strain ATCC BAA-161 / DSM 6008 / Z-2901).